Consider the following 464-residue polypeptide: A-type ATP synthase subunit B (464 aa).

The protein belongs to the ATPase alpha/beta chains family. As to quaternary structure, has multiple subunits with at least A(3), B(3), C, D, E, F, H, I and proteolipid K(x).

The protein resides in the cell membrane. Component of the A-type ATP synthase that produces ATP from ADP in the presence of a proton gradient across the membrane. The B chain is a regulatory subunit. This chain is A-type ATP synthase subunit B, found in Methanococcus aeolicus (strain ATCC BAA-1280 / DSM 17508 / OCM 812 / Nankai-3).